The sequence spans 81 residues: RNA-binding protein Hfq (81 aa).

One can recognise a Sm domain in the interval 9 to 68; that stretch reads DPYLNILRKERVPVSIFLVNGIKLQGQIESFDQFVILLKNTVSQMVYKHAISTVVPSRTI.

Belongs to the Hfq family. Homohexamer.

RNA chaperone that binds small regulatory RNA (sRNAs) and mRNAs to facilitate mRNA translational regulation in response to envelope stress, environmental stress and changes in metabolite concentrations. Also binds with high specificity to tRNAs. In Marinomonas sp. (strain MWYL1), this protein is RNA-binding protein Hfq.